Here is an 81-residue protein sequence, read N- to C-terminus: Small ribosomal subunit protein bS20 (81 aa).

The segment covering 1–11 (MPNIKSQKKRV) has biased composition (basic residues). The tract at residues 1 to 20 (MPNIKSQKKRVLTNEKSRAS) is disordered.

It belongs to the bacterial ribosomal protein bS20 family.

Its function is as follows. Binds directly to 16S ribosomal RNA. The sequence is that of Small ribosomal subunit protein bS20 from Mesoplasma florum (strain ATCC 33453 / NBRC 100688 / NCTC 11704 / L1) (Acholeplasma florum).